A 458-amino-acid polypeptide reads, in one-letter code: Argininosuccinate lyase (458 aa).

Belongs to the lyase 1 family. Argininosuccinate lyase subfamily.

Its subcellular location is the cytoplasm. It carries out the reaction 2-(N(omega)-L-arginino)succinate = fumarate + L-arginine. Its pathway is amino-acid biosynthesis; L-arginine biosynthesis; L-arginine from L-ornithine and carbamoyl phosphate: step 3/3. The polypeptide is Argininosuccinate lyase (Salmonella newport (strain SL254)).